The chain runs to 494 residues: Autocrine proliferation repressor protein A (494 aa).

An N-terminal signal peptide occupies residues 1 to 18; the sequence is MSKLLILLLLSLVASIFS. Residues Asn-37, Asn-153, and Asn-302 are each glycosylated (N-linked (GlcNAc...) asparagine).

This sequence belongs to the pqaA family. In terms of assembly, interacts with cfaD.

The protein localises to the secreted. In terms of biological role, inhibitor that slows proliferation of secreting cells (also known as chalone). May function by binding to cell surface receptors. Requires cfaD for activity. Overexpression slows proliferation. The sequence is that of Autocrine proliferation repressor protein A (aprA) from Dictyostelium discoideum (Social amoeba).